The primary structure comprises 106 residues: Foxo1-corepressor (106 aa).

The segment at 1–44 is disordered; the sequence is MGGPTRRHQEEGSAECLGGPSTRAAPGPGLRDFHFTTAGPSKAD. The Nuclear export signal motif lies at 78–87; sequence IGTLYIRLDL. Threonine 93 bears the Phosphothreonine; by PKA mark.

Interacts with FOXO1 (via N-terminal domain); the interaction is direct, occurs in a forskolin-independent manner that prevents SIRT1 binding to FOXO1. Interacts with FOXO3. Does not interact with FOXO4. In terms of processing, phosphorylated at Thr-93 by PKA, leading to import into the nucleus. Expressed in adipocytes. Expressed in brown and white adipose tissue but not in liver. Protein levels in brown and white adipose tissues decrease following fasting (at protein level). Expressed in white and brown adipose tissues. Expressed in adipocytes. Not expressed in liver, skeletal muscle and brain.

It localises to the cytoplasm. It is found in the cytosol. The protein resides in the nucleus. Regulator of adipocytes that acts by repressing FOXO1 transcriptional activity. Acts by promoting acetylation of FOXO1, both by preventing the interaction between FOXO1 and SIRT1 deacetylase, and by mediating acetyltransferase activity in vitro. Regulates insulin sensitivity and energy metabolism. The sequence is that of Foxo1-corepressor (Fcor) from Mus musculus (Mouse).